Reading from the N-terminus, the 312-residue chain is MAKISILFMGTPEFALPSLEILVRNGYPIAAVVTQPDRPKGRGKQLVAPPVKIAATSYQIPVLQPPGIKDPAFLEILEKISPDLIVVAAFGQILPKTVLDFPPLGCINVHPSLLPRYRGAAPINWTLIHGETRTGVTIMYMDEGLDTGDILLQEETPIPPEENFGILHDRLSNLGADLLLRAVRLLEAHQAPRNPQEDSLSSYAPMLKKEDGLIRWSEEVSTIANRIRGLSPAPGAYTFLNGKTLKIFAAAGIEQSVPGQPGEVGKLTDQGLQVTAGNGYVVLQDVQMENRKRMNVSDFLRGHKLSTGTVLG.

112–115 (SLLP) is a (6S)-5,6,7,8-tetrahydrofolate binding site.

Belongs to the Fmt family.

It catalyses the reaction L-methionyl-tRNA(fMet) + (6R)-10-formyltetrahydrofolate = N-formyl-L-methionyl-tRNA(fMet) + (6S)-5,6,7,8-tetrahydrofolate + H(+). Attaches a formyl group to the free amino group of methionyl-tRNA(fMet). The formyl group appears to play a dual role in the initiator identity of N-formylmethionyl-tRNA by promoting its recognition by IF2 and preventing the misappropriation of this tRNA by the elongation apparatus. The polypeptide is Methionyl-tRNA formyltransferase (Syntrophus aciditrophicus (strain SB)).